A 60-amino-acid polypeptide reads, in one-letter code: MARLKVTQVRSEIGTKRNQRDSLRSLGLKRINDVVVKEDRPEIRGMIFTVNHLVKVEEVE.

The protein belongs to the universal ribosomal protein uL30 family. Part of the 50S ribosomal subunit.

The polypeptide is Large ribosomal subunit protein uL30 (Salinispora arenicola (strain CNS-205)).